A 286-amino-acid polypeptide reads, in one-letter code: Putative quercetin 2,3-dioxygenase PA2418 (286 aa).

A divalent metal cation is bound by residues His61, His63, His105, and Glu107.

The protein belongs to the pirin family. A divalent metal cation serves as cofactor.

The catalysed reaction is quercetin + O2 = 2-(3,4-dihydroxybenzoyloxy)-4,6-dihydroxybenzoate + CO. It participates in flavonoid metabolism; quercetin degradation. Putative quercetin 2,3-dioxygenase. This Pseudomonas aeruginosa (strain ATCC 15692 / DSM 22644 / CIP 104116 / JCM 14847 / LMG 12228 / 1C / PRS 101 / PAO1) protein is Putative quercetin 2,3-dioxygenase PA2418.